A 648-amino-acid polypeptide reads, in one-letter code: Wilms tumor protein 1-interacting protein homolog (648 aa).

3 disordered regions span residues 27-56 (DGMYGEPNPDMEKTKRMNGSSSTPGNKVYS), 142-291 (SNSL…SPRS), and 306-327 (SPRSSISSHSSRSSRSSRGSMS). Low complexity-rich tracts occupy residues 158-171 (SPRSSLASSHSSQD) and 178-192 (PRSSISSPRSSLVSP). Composition is skewed to polar residues over residues 197-213 (GTSVISPRSSYASTASD) and 220-241 (PRTSLNSYDCGSKPSSNRTSGI). The span at 252–267 (PRSSTTSPRSSYSDSR) shows a compositional bias: low complexity. LIM zinc-binding domains follow at residues 437–498 (GICV…SGFQ), 502–561 (EKCF…TVFA), and 562–631 (PKCA…RLKT).

It belongs to the zyxin/ajuba family.

It localises to the cell junction. The protein localises to the adherens junction. The protein resides in the nucleus. In terms of biological role, may monitor slit diaphragm protein assembly, a specialized adherens junction characteristic of podocytes. In case of podocyte injury, it shuttles into the nucleus and acts as a transcription regulator. Plays a role in the regulation of cell morphology and cytoskeletal organization. Acts as a transcriptional corepressor for snai1 and snai2/slug and plays a role in regulating neural crest development. This Danio rerio (Zebrafish) protein is Wilms tumor protein 1-interacting protein homolog (wtip).